The sequence spans 195 residues: Probable DNA-directed RNA polymerase subunit delta (195 aa).

Residues F14–W81 enclose the HTH HARE-type domain. 2 stretches are compositionally biased toward acidic residues: residues D120–I172 and G181–K195. A disordered region spans residues D120 to K195.

The protein belongs to the RpoE family. RNAP is composed of a core of 2 alpha, a beta and a beta' subunits. The core is associated with a delta subunit and one of several sigma factors.

In terms of biological role, participates in both the initiation and recycling phases of transcription. In the presence of the delta subunit, RNAP displays an increased specificity of transcription, a decreased affinity for nucleic acids, and an increased efficiency of RNA synthesis because of enhanced recycling. In Leuconostoc mesenteroides subsp. mesenteroides (strain ATCC 8293 / DSM 20343 / BCRC 11652 / CCM 1803 / JCM 6124 / NCDO 523 / NBRC 100496 / NCIMB 8023 / NCTC 12954 / NRRL B-1118 / 37Y), this protein is Probable DNA-directed RNA polymerase subunit delta.